We begin with the raw amino-acid sequence, 259 residues long: MAKYQGEVQSLKLDDDSVIEGVSDQVLVAVVVSLALIATLVYALFSRNAHQNIHPENQELVRVLREQLQTEQDAPAAARQQFYTDMYCPICLHQASLPVETNCGHLFCGTCIVAYWRYGSWLGAISCPICRQTVTLLLPVFGENDQSQDVVSLHQDISDYNRRFSGQPRSIMERIMDLPTLLRHAFREMFSVGGLFWMFRIRIILCLMGAFFYLISPLDFVPEALFGILGFLDDFFVIFLLLIYISIMYREVITQRLNR.

Residues M1 to Q25 lie on the Lumenal side of the membrane. The chain crosses the membrane as a helical span at residues V26–S46. Over R47–R202 the chain is Cytoplasmic. The RING-type zinc-finger motif lies at C88–R131. A helical transmembrane segment spans residues I203–E223. A topological domain (lumenal) is located at residue A224. Residues L225 to I245 form a helical membrane-spanning segment. The Cytoplasmic portion of the chain corresponds to S246 to R259.

Constitutively associated with the ERLIN1/ERLIN 2 complex. Interacts with activated ITPR1.

It is found in the endoplasmic reticulum membrane. The catalysed reaction is S-ubiquitinyl-[E2 ubiquitin-conjugating enzyme]-L-cysteine + [acceptor protein]-L-lysine = [E2 ubiquitin-conjugating enzyme]-L-cysteine + N(6)-ubiquitinyl-[acceptor protein]-L-lysine.. It functions in the pathway protein modification; protein ubiquitination. Its function is as follows. E3 ubiquitin-protein ligase. Plays an essential role in stimulus-induced inositol 1,4,5-trisphosphate receptor type 1 (ITPR1) ubiquitination and degradation via the endoplasmic reticulum-associated degradation (ERAD) pathway. Also involved in ITPR1 turnover in resting cells. Selectively inhibits the TLR3-triggered innate immune response by promoting the 'Lys-48'-linked polyubiquitination and degradation of TLR3. This is E3 ubiquitin-protein ligase RNF170 (RNF170) from Bos taurus (Bovine).